A 130-amino-acid polypeptide reads, in one-letter code: MIGNWNYGTGRRKTSVARVFIKKGSGKIVVNGKPVDEFFARETGRMIVRQPLELTGHLESFDIKVNVHGGGETGQAGAVRHGITRALIDYDAALKPALSQAGFVTRDAREVERKKVGFRKARRRKQFSKR.

It belongs to the universal ribosomal protein uS9 family.

The sequence is that of Small ribosomal subunit protein uS9 from Bordetella bronchiseptica (strain ATCC BAA-588 / NCTC 13252 / RB50) (Alcaligenes bronchisepticus).